The primary structure comprises 295 residues: Ethanolamine ammonia-lyase small subunit (295 aa).

Adenosylcob(III)alamin is bound by residues Val-207, Glu-228, and Cys-258.

It belongs to the EutC family. The basic unit is a heterodimer which dimerizes to form tetramers. The heterotetramers trimerize; 6 large subunits form a core ring with 6 small subunits projecting outwards. Requires adenosylcob(III)alamin as cofactor.

It is found in the bacterial microcompartment. The catalysed reaction is ethanolamine = acetaldehyde + NH4(+). Its pathway is amine and polyamine degradation; ethanolamine degradation. In terms of biological role, catalyzes the deamination of various vicinal amino-alcohols to oxo compounds. Allows this organism to utilize ethanolamine as the sole source of nitrogen and carbon in the presence of external vitamin B12. This chain is Ethanolamine ammonia-lyase small subunit, found in Escherichia coli (strain SE11).